The sequence spans 473 residues: Glutamate--tRNA ligase (473 aa).

The short motif at 11–21 (PSPTGFLHIGG) is the 'HIGH' region element. Positions 240–244 (KLSKR) match the 'KMSKS' region motif. K243 contributes to the ATP binding site.

Belongs to the class-I aminoacyl-tRNA synthetase family. Glutamate--tRNA ligase type 1 subfamily. In terms of assembly, monomer.

It is found in the cytoplasm. It carries out the reaction tRNA(Glu) + L-glutamate + ATP = L-glutamyl-tRNA(Glu) + AMP + diphosphate. Its function is as follows. Catalyzes the attachment of glutamate to tRNA(Glu) in a two-step reaction: glutamate is first activated by ATP to form Glu-AMP and then transferred to the acceptor end of tRNA(Glu). This chain is Glutamate--tRNA ligase, found in Rhodopseudomonas palustris (strain ATCC BAA-98 / CGA009).